The chain runs to 613 residues: Transcription factor MTB1 (613 aa).

The interval 48–130 (LQNKLSDLVE…RVLQKLHMLF (83 aa)) is JAZ-interaction domain. 2 disordered regions span residues 256-285 (EKNE…FGHD) and 391-441 (AHNV…AERQ). Polar residues predominate over residues 260 to 270 (GNNPRLSNSGA). Basic and acidic residues-rich tracts occupy residues 394–417 (VESE…DEKR) and 427–441 (NGRE…AERQ). Residues 430-443 (EEPLNHVEAERQRR) form a basic motif; degenerate region. Residues 430 to 479 (EEPLNHVEAERQRREKLNQRFYALRAVVPNISKMDKASLLGDAIAYITEL) form the bHLH domain. Positions 444 to 479 (EKLNQRFYALRAVVPNISKMDKASLLGDAIAYITEL) are helix-loop-helix motif. The interval 490 to 513 (RELRLGSTSRDAITSEDSPSSEIQ) is disordered. The segment covering 495-512 (GSTSRDAITSEDSPSSEI) has biased composition (polar residues).

As to quaternary structure, interacts with MYC2 (via N-terminus). MTB1 competes with MED25 for binding to MYC2. Interacts (via N-terminus) with JAZ7.

The protein resides in the nucleus. In terms of biological role, transcription factor that negatively regulates jasmonate (JA) signaling. Negatively regulates JA-dependent response to wounding, JA-induced expression of defense genes, JA-dependent responses against herbivorous insects, and JA-dependent resistance against Botrytis cinerea infection. Plays a positive role in resistance against the bacterial pathogen Pseudomonas syringae pv tomato DC3000. The chain is Transcription factor MTB1 from Solanum lycopersicum (Tomato).